Consider the following 248-residue polypeptide: 3-deoxy-manno-octulosonate cytidylyltransferase (248 aa).

This sequence belongs to the KdsB family.

The protein localises to the cytoplasm. It carries out the reaction 3-deoxy-alpha-D-manno-oct-2-ulosonate + CTP = CMP-3-deoxy-beta-D-manno-octulosonate + diphosphate. Its pathway is nucleotide-sugar biosynthesis; CMP-3-deoxy-D-manno-octulosonate biosynthesis; CMP-3-deoxy-D-manno-octulosonate from 3-deoxy-D-manno-octulosonate and CTP: step 1/1. The protein operates within bacterial outer membrane biogenesis; lipopolysaccharide biosynthesis. Functionally, activates KDO (a required 8-carbon sugar) for incorporation into bacterial lipopolysaccharide in Gram-negative bacteria. This is 3-deoxy-manno-octulosonate cytidylyltransferase from Salmonella paratyphi A (strain ATCC 9150 / SARB42).